The following is a 136-amino-acid chain: NADPH-dependent 7-cyano-7-deazaguanine reductase (136 aa).

The active-site Thioimide intermediate is cysteine 53. Aspartate 60 (proton donor) is an active-site residue. Substrate contacts are provided by residues 75–77 (VEL) and 94–95 (HE).

This sequence belongs to the GTP cyclohydrolase I family. QueF type 1 subfamily.

The protein localises to the cytoplasm. The catalysed reaction is 7-aminomethyl-7-carbaguanine + 2 NADP(+) = 7-cyano-7-deazaguanine + 2 NADPH + 3 H(+). It functions in the pathway tRNA modification; tRNA-queuosine biosynthesis. In terms of biological role, catalyzes the NADPH-dependent reduction of 7-cyano-7-deazaguanine (preQ0) to 7-aminomethyl-7-deazaguanine (preQ1). The polypeptide is NADPH-dependent 7-cyano-7-deazaguanine reductase (Trichormus variabilis (strain ATCC 29413 / PCC 7937) (Anabaena variabilis)).